The sequence spans 157 residues: MPRRRVVATREILPDPKFGSQTVAKFINHVMSHGKKSTAERIVYGALETVSQKRNIEDPVSFFEEVLENVRPMVEVKARRVGGATYQVPMEVRPSRRTALAMRWLAEAAAKRSEKSMALRLAGELNDAADGKGNAMKKRDEVHRMADANKAFSHYRF.

It belongs to the universal ribosomal protein uS7 family. As to quaternary structure, part of the 30S ribosomal subunit. Contacts proteins S9 and S11.

In terms of biological role, one of the primary rRNA binding proteins, it binds directly to 16S rRNA where it nucleates assembly of the head domain of the 30S subunit. Is located at the subunit interface close to the decoding center, probably blocks exit of the E-site tRNA. The sequence is that of Small ribosomal subunit protein uS7 from Psychrobacter cryohalolentis (strain ATCC BAA-1226 / DSM 17306 / VKM B-2378 / K5).